A 63-amino-acid polypeptide reads, in one-letter code: MMFRLTSVLLVIVLLNLVVLTNACHMDCSKMICCSGICCFYCGLPSCDDTRRALLQRLLGHQR.

The first 23 residues, 1 to 23, serve as a signal peptide directing secretion; sequence MMFRLTSVLLVIVLLNLVVLTNA. Intrachain disulfides connect C24–C34, C28–C39, C33–C42, and C38–C47. The propeptide occupies 53–63; sequence ALLQRLLGHQR.

Belongs to the conotoxin I2 superfamily. In terms of tissue distribution, expressed by the venom duct.

It localises to the secreted. This Conus litteratus (Lettered cone) protein is Conotoxin Lt11.1.